The chain runs to 393 residues: NAD(P)H-quinone oxidoreductase subunit H, chloroplastic (393 aa).

Belongs to the complex I 49 kDa subunit family. NDH is composed of at least 16 different subunits, 5 of which are encoded in the nucleus.

Its subcellular location is the plastid. The protein resides in the chloroplast thylakoid membrane. It carries out the reaction a plastoquinone + NADH + (n+1) H(+)(in) = a plastoquinol + NAD(+) + n H(+)(out). The enzyme catalyses a plastoquinone + NADPH + (n+1) H(+)(in) = a plastoquinol + NADP(+) + n H(+)(out). Its function is as follows. NDH shuttles electrons from NAD(P)H:plastoquinone, via FMN and iron-sulfur (Fe-S) centers, to quinones in the photosynthetic chain and possibly in a chloroplast respiratory chain. The immediate electron acceptor for the enzyme in this species is believed to be plastoquinone. Couples the redox reaction to proton translocation, and thus conserves the redox energy in a proton gradient. The sequence is that of NAD(P)H-quinone oxidoreductase subunit H, chloroplastic from Lactuca sativa (Garden lettuce).